Here is a 334-residue protein sequence, read N- to C-terminus: Cathepsin K (334 aa).

Residues 1–19 (MLRLHWLALLVLLLPMAAA) form the signal peptide. A propeptide spans 20–119 (QLRPEPELDA…TLYVPDWSSR (100 aa)) (activation peptide). Asparagine 108 carries N-linked (GlcNAc...) asparagine glycosylation. 3 disulfide bridges follow: cysteine 141–cysteine 182, cysteine 175–cysteine 215, and cysteine 274–cysteine 323. The active site involves cysteine 144. Catalysis depends on residues histidine 281 and asparagine 301.

It belongs to the peptidase C1 family.

The enzyme catalyses Broad proteolytic activity. With small-molecule substrates and inhibitors, the major determinant of specificity is P2, which is preferably Leu, Met &gt; Phe, and not Arg.. Its function is as follows. Closely involved in osteoclastic bone resorption and may participate partially in the disorder of bone remodeling. Displays potent endoprotease activity against fibrinogen at acid pH. May play an important role in extracellular matrix degradation. The polypeptide is Cathepsin K (CTSK) (Gallus gallus (Chicken)).